The chain runs to 137 residues: Peptide methionine sulfoxide reductase MsrB (137 aa).

The MsrB domain occupies Ala7–Glu129. Cys46, Cys49, Cys95, and Cys98 together coordinate Zn(2+). Catalysis depends on Cys118, which acts as the Nucleophile.

It belongs to the MsrB Met sulfoxide reductase family. It depends on Zn(2+) as a cofactor.

It catalyses the reaction L-methionyl-[protein] + [thioredoxin]-disulfide + H2O = L-methionyl-(R)-S-oxide-[protein] + [thioredoxin]-dithiol. The chain is Peptide methionine sulfoxide reductase MsrB from Salmonella arizonae (strain ATCC BAA-731 / CDC346-86 / RSK2980).